A 483-amino-acid polypeptide reads, in one-letter code: CBL-interacting serine/threonine-protein kinase 19 (483 aa).

The Protein kinase domain occupies 28–282 (YEMGRLLGHG…MPDIMETSWF (255 aa)). ATP contacts are provided by residues 34 to 42 (LGHGTFAKV) and Lys-57. Catalysis depends on Asp-150, which acts as the Proton acceptor. The tract at residues 168-197 (DFGLSAVSDQIRQDGLFHTFCGTPAYVAPE) is activation loop. At Ser-172 the chain carries Phosphoserine. Thr-186 bears the Phosphothreonine mark. Polar residues predominate over residues 313–322 (SVSGRSSTVS). Residues 313–338 (SVSGRSSTVSEPEDFESFDGRRRGGS) are disordered. Residues 340-364 (PRPASLNAFDLISFSPGFDLSGLFE) form the NAF domain. A PPI region spans residues 367 to 396 (GEGSRFVSGAPVGQIISKLEEIARIVSFTV). The tract at residues 459–483 (NLSSENGQRVSGSRSLPSFLLSDTD) is disordered.

It belongs to the protein kinase superfamily. CAMK Ser/Thr protein kinase family. SNF1 subfamily. It depends on Mn(2+) as a cofactor.

It carries out the reaction L-seryl-[protein] + ATP = O-phospho-L-seryl-[protein] + ADP + H(+). It catalyses the reaction L-threonyl-[protein] + ATP = O-phospho-L-threonyl-[protein] + ADP + H(+). In terms of biological role, CIPK serine-threonine protein kinases interact with CBL proteins. Binding of a CBL protein to the regulatory NAF domain of CIPK protein lead to the activation of the kinase in a calcium-dependent manner. The sequence is that of CBL-interacting serine/threonine-protein kinase 19 (CIPK19) from Arabidopsis thaliana (Mouse-ear cress).